A 200-amino-acid polypeptide reads, in one-letter code: Probable GTP-binding protein EngB (200 aa).

Residues 26–200 (SIPEIAIAGR…IYEIAQCIKK (175 aa)) enclose the EngB-type G domain. GTP is bound by residues 34–41 (GRSNVGKS), 61–65 (GCTKQ), 80–83 (DLPG), 147–150 (TKID), and 176–179 (VISA). Mg(2+)-binding residues include serine 41 and threonine 63.

Belongs to the TRAFAC class TrmE-Era-EngA-EngB-Septin-like GTPase superfamily. EngB GTPase family. It depends on Mg(2+) as a cofactor.

Necessary for normal cell division and for the maintenance of normal septation. The protein is Probable GTP-binding protein EngB of Ehrlichia canis (strain Jake).